A 282-amino-acid polypeptide reads, in one-letter code: UPF0759 protein YunF (282 aa).

This sequence belongs to the UPF0759 family.

This is UPF0759 protein YunF (yunF) from Bacillus subtilis (strain 168).